The primary structure comprises 82 residues: Cytochrome c oxidase subunit 8, mitochondrial (82 aa).

The transit peptide at 1 to 31 (MFSRVALRAAPRQQPFSLVARRTFQTTRAQL) directs the protein to the mitochondrion. Topologically, residues 32-52 (SSPYHYPEGPRSNLPFNPKTR) are mitochondrial matrix. Residues 53–75 (FFWFRYLMYCVVGFGSPVAIAVW) traverse the membrane as a helical segment. Residues 76-82 (QTYRPRS) lie on the Mitochondrial intermembrane side of the membrane.

Belongs to the cytochrome c oxidase VIIc family. As to quaternary structure, component of the cytochrome c oxidase (complex IV, CIV), a multisubunit enzyme composed of 11 subunits. The complex is composed of a catalytic core of 3 subunits Cox1, Cox2 and Cox3, encoded in the mitochondrial DNA, and 8 supernumerary subunits Cox4, Cox5a/Cox5, Cox6, Cox7, Cox8, Cox7a/Cox9, Cox6b/Cox12 and Cox6a/Cox13, which are encoded in the nuclear genome. The complex exists as a monomer or a dimer and forms respiratory supercomplexes (SCs) in the inner mitochondrial membrane with NADH-ubiquinone oxidoreductase (complex I, CI) and ubiquinol-cytochrome c oxidoreductase (cytochrome b-c1 complex, complex III, CIII), resulting in various different assemblies (supercomplexes I(1)IV(1), I(1)III(3)IV(2), III(2)IV(1) and III(2)IV(2) as well as larger supercomplexes of compositions like I(1)III(2)IV(5-6)).

It localises to the mitochondrion inner membrane. Its pathway is energy metabolism; oxidative phosphorylation. In terms of biological role, component of the cytochrome c oxidase, the last enzyme in the mitochondrial electron transport chain which drives oxidative phosphorylation. The respiratory chain contains 3 multisubunit complexes succinate dehydrogenase (complex II, CII), ubiquinol-cytochrome c oxidoreductase (cytochrome b-c1 complex, complex III, CIII) and cytochrome c oxidase (complex IV, CIV), that cooperate to transfer electrons derived from NADH and succinate to molecular oxygen, creating an electrochemical gradient over the inner membrane that drives transmembrane transport and the ATP synthase. Cytochrome c oxidase is the component of the respiratory chain that catalyzes the reduction of oxygen to water. Electrons originating from reduced cytochrome c in the intermembrane space (IMS) are transferred via the dinuclear copper A center (CU(A)) of Cox2 and heme A of Cox1 to the active site in Cox1, a binuclear center (BNC) formed by heme A3 and copper B (CU(B)). The BNC reduces molecular oxygen to 2 water molecules using 4 electrons from cytochrome c in the IMS and 4 protons from the mitochondrial matrix. This chain is Cytochrome c oxidase subunit 8, mitochondrial (cox-15), found in Neurospora crassa (strain ATCC 24698 / 74-OR23-1A / CBS 708.71 / DSM 1257 / FGSC 987).